Reading from the N-terminus, the 274-residue chain is Probable cyclic nucleotide phosphodiesterase RPA0124 (274 aa).

Aspartate 8, histidine 10, aspartate 49, asparagine 79, histidine 155, histidine 194, and histidine 196 together coordinate Fe cation. AMP contacts are provided by residues histidine 10, aspartate 49, and 79-80 (NH). Histidine 196 is an AMP binding site.

It belongs to the cyclic nucleotide phosphodiesterase class-III family. Fe(2+) is required as a cofactor.

This is Probable cyclic nucleotide phosphodiesterase RPA0124 from Rhodopseudomonas palustris (strain ATCC BAA-98 / CGA009).